An 86-amino-acid polypeptide reads, in one-letter code: Small ribosomal subunit protein uS17 (86 aa).

The protein belongs to the universal ribosomal protein uS17 family. As to quaternary structure, part of the 30S ribosomal subunit.

In terms of biological role, one of the primary rRNA binding proteins, it binds specifically to the 5'-end of 16S ribosomal RNA. This is Small ribosomal subunit protein uS17 from Roseiflexus sp. (strain RS-1).